A 273-amino-acid polypeptide reads, in one-letter code: Ribosomal RNA small subunit methyltransferase A (273 aa).

Residues asparagine 18, leucine 20, glycine 45, glutamate 66, aspartate 91, and asparagine 113 each contribute to the S-adenosyl-L-methionine site.

It belongs to the class I-like SAM-binding methyltransferase superfamily. rRNA adenine N(6)-methyltransferase family. RsmA subfamily.

It is found in the cytoplasm. It carries out the reaction adenosine(1518)/adenosine(1519) in 16S rRNA + 4 S-adenosyl-L-methionine = N(6)-dimethyladenosine(1518)/N(6)-dimethyladenosine(1519) in 16S rRNA + 4 S-adenosyl-L-homocysteine + 4 H(+). Specifically dimethylates two adjacent adenosines (A1518 and A1519) in the loop of a conserved hairpin near the 3'-end of 16S rRNA in the 30S particle. May play a critical role in biogenesis of 30S subunits. This chain is Ribosomal RNA small subunit methyltransferase A, found in Escherichia coli (strain 55989 / EAEC).